The chain runs to 966 residues: Insulin-degrading enzyme-like 2 (966 aa).

H71 is a binding site for Zn(2+). Catalysis depends on E74, which acts as the Proton acceptor. H75 is a binding site for Zn(2+). The active site involves E145. E152 is a Zn(2+) binding site.

This sequence belongs to the peptidase M16 family. Requires Zn(2+) as cofactor.

In Arabidopsis thaliana (Mouse-ear cress), this protein is Insulin-degrading enzyme-like 2.